Consider the following 98-residue polypeptide: NADH-ubiquinone oxidoreductase chain 4L (98 aa).

3 helical membrane passes run 1 to 21 (MSMV…GLLM), 29 to 49 (SLLC…VTIL), and 61 to 81 (IILL…LVMV).

The protein belongs to the complex I subunit 4L family. As to quaternary structure, core subunit of respiratory chain NADH dehydrogenase (Complex I) which is composed of 45 different subunits.

It is found in the mitochondrion inner membrane. The catalysed reaction is a ubiquinone + NADH + 5 H(+)(in) = a ubiquinol + NAD(+) + 4 H(+)(out). Core subunit of the mitochondrial membrane respiratory chain NADH dehydrogenase (Complex I) which catalyzes electron transfer from NADH through the respiratory chain, using ubiquinone as an electron acceptor. Part of the enzyme membrane arm which is embedded in the lipid bilayer and involved in proton translocation. This chain is NADH-ubiquinone oxidoreductase chain 4L (MT-ND4L), found in Pusa hispida (Ringed seal).